We begin with the raw amino-acid sequence, 132 residues long: Small ribosomal subunit protein uS8 (132 aa).

Belongs to the universal ribosomal protein uS8 family. Part of the 30S ribosomal subunit. Contacts proteins S5 and S12.

In terms of biological role, one of the primary rRNA binding proteins, it binds directly to 16S rRNA central domain where it helps coordinate assembly of the platform of the 30S subunit. This is Small ribosomal subunit protein uS8 from Bradyrhizobium sp. (strain BTAi1 / ATCC BAA-1182).